The primary structure comprises 385 residues: Acetylornithine aminotransferase (385 aa).

Residues 94 to 95 and F126 contribute to the pyridoxal 5'-phosphate site; that span reads GT. R129 lines the N(2)-acetyl-L-ornithine pocket. 211 to 214 contacts pyridoxal 5'-phosphate; it reads DEVQ. K240 bears the N6-(pyridoxal phosphate)lysine mark. T267 provides a ligand contact to N(2)-acetyl-L-ornithine. T268 serves as a coordination point for pyridoxal 5'-phosphate.

This sequence belongs to the class-III pyridoxal-phosphate-dependent aminotransferase family. ArgD subfamily. In terms of assembly, homodimer. The cofactor is pyridoxal 5'-phosphate.

The protein resides in the cytoplasm. It catalyses the reaction N(2)-acetyl-L-ornithine + 2-oxoglutarate = N-acetyl-L-glutamate 5-semialdehyde + L-glutamate. It functions in the pathway amino-acid biosynthesis; L-arginine biosynthesis; N(2)-acetyl-L-ornithine from L-glutamate: step 4/4. The polypeptide is Acetylornithine aminotransferase (Thermotoga maritima (strain ATCC 43589 / DSM 3109 / JCM 10099 / NBRC 100826 / MSB8)).